The primary structure comprises 124 residues: Small ribosomal subunit protein uS12 (124 aa).

Asp-89 is subject to 3-methylthioaspartic acid.

Belongs to the universal ribosomal protein uS12 family. Part of the 30S ribosomal subunit. Contacts proteins S8 and S17. May interact with IF1 in the 30S initiation complex.

With S4 and S5 plays an important role in translational accuracy. Functionally, interacts with and stabilizes bases of the 16S rRNA that are involved in tRNA selection in the A site and with the mRNA backbone. Located at the interface of the 30S and 50S subunits, it traverses the body of the 30S subunit contacting proteins on the other side and probably holding the rRNA structure together. The combined cluster of proteins S8, S12 and S17 appears to hold together the shoulder and platform of the 30S subunit. This chain is Small ribosomal subunit protein uS12, found in Psychrobacter arcticus (strain DSM 17307 / VKM B-2377 / 273-4).